A 138-amino-acid polypeptide reads, in one-letter code: Large ribosomal subunit protein uL16 (138 aa).

The span at 1–13 (MLQPKRRKYRKEQ) shows a compositional bias: basic residues. Residues 1–24 (MLQPKRRKYRKEQKGRNTGKATRG) are disordered.

It belongs to the universal ribosomal protein uL16 family. As to quaternary structure, part of the 50S ribosomal subunit.

Binds 23S rRNA and is also seen to make contacts with the A and possibly P site tRNAs. This chain is Large ribosomal subunit protein uL16, found in Burkholderia lata (strain ATCC 17760 / DSM 23089 / LMG 22485 / NCIMB 9086 / R18194 / 383).